Consider the following 161-residue polypeptide: Nucleotide-binding protein RC1_3464 (161 aa).

It belongs to the YajQ family.

In terms of biological role, nucleotide-binding protein. In Rhodospirillum centenum (strain ATCC 51521 / SW), this protein is Nucleotide-binding protein RC1_3464.